The chain runs to 118 residues: GRB2-related adapter protein-like (118 aa).

Residues 1–58 (MESVALYSFQATESDELAFNKGDTLKILNMEDDQNWYKAELRGVEGFIPKNYIRVKPH) enclose the SH3 domain. Residues 60 to 118 (WYSGRISRQLAEEILMKRNHLGAFLIRESESSPGEFSVSVNNRAQRGPCLGPKSHSRLG) form the SH2 domain. A disordered region spans residues 89–118 (ESSPGEFSVSVNNRAQRGPCLGPKSHSRLG). Positions 90 to 103 (SSPGEFSVSVNNRA) are enriched in polar residues.

The protein belongs to the GRB2/sem-5/DRK family.

This chain is GRB2-related adapter protein-like (GRAPL), found in Homo sapiens (Human).